A 624-amino-acid chain; its full sequence is Mannosyl-oligosaccharide 1,2-alpha-mannosidase MNS3 (624 aa).

Topologically, residues 1 to 43 (MSKSLPYSVKDIHYDNAKFRHRSPLKVFSQSLLTLSTKRNYAS) are cytoplasmic. A helical; Signal-anchor for type II membrane protein membrane pass occupies residues 44-64 (CSTGKFLILILFFGVACLMLM). The Lumenal segment spans residues 65–624 (SKSPNESGLN…AHPLPIRRNT (560 aa)). N-linked (GlcNAc...) asparagine glycans are attached at residues Asn-69 and Asn-114. Residues 91–123 (LRKPPRLPPRLSPDEGQLRGSSTNGSTISNSDP) form a disordered region. Low complexity predominate over residues 110-121 (GSSTNGSTISNS). Glu-212 serves as the catalytic Proton donor. Residue Asn-236 is glycosylated (N-linked (GlcNAc...) asparagine). Asp-357 is an active-site residue. The N-linked (GlcNAc...) asparagine glycan is linked to Asn-377. Cys-428 and Cys-471 form a disulfide bridge. Glu-485 acts as the Proton donor in catalysis. Asn-503 is a glycosylation site (N-linked (GlcNAc...) asparagine). The active site involves Glu-526. Thr-613 provides a ligand contact to Ca(2+).

The protein belongs to the glycosyl hydrolase 47 family. It depends on Ca(2+) as a cofactor. Mn(2+) serves as cofactor. Requires Mg(2+) as cofactor. As to expression, expressed in flowers, siliques, stems, leaves, roots, stamens and sepals.

It is found in the golgi apparatus. The protein localises to the cis-Golgi network membrane. It carries out the reaction N(4)-(alpha-D-Man-(1-&gt;2)-alpha-D-Man-(1-&gt;2)-alpha-D-Man-(1-&gt;3)-[alpha-D-Man-(1-&gt;2)-alpha-D-Man-(1-&gt;3)-[alpha-D-Man-(1-&gt;2)-alpha-D-Man-(1-&gt;6)]-alpha-D-Man-(1-&gt;6)]-beta-D-Man-(1-&gt;4)-beta-D-GlcNAc-(1-&gt;4)-beta-D-GlcNAc)-L-asparaginyl-[protein] (N-glucan mannose isomer 9A1,2,3B1,2,3) + 4 H2O = N(4)-(alpha-D-Man-(1-&gt;3)-[alpha-D-Man-(1-&gt;3)-[alpha-D-Man-(1-&gt;6)]-alpha-D-Man-(1-&gt;6)]-beta-D-Man-(1-&gt;4)-beta-D-GlcNAc-(1-&gt;4)-beta-D-GlcNAc)-L-asparaginyl-[protein] (N-glucan mannose isomer 5A1,2) + 4 beta-D-mannose. The enzyme catalyses N(4)-(alpha-D-Man-(1-&gt;2)-alpha-D-Man-(1-&gt;2)-alpha-D-Man-(1-&gt;3)-[alpha-D-Man-(1-&gt;3)-[alpha-D-Man-(1-&gt;2)-alpha-D-Man-(1-&gt;6)]-alpha-D-Man-(1-&gt;6)]-beta-D-Man-(1-&gt;4)-beta-D-GlcNAc-(1-&gt;4)-beta-D-GlcNAc)-L-asparaginyl-[protein] (N-glucan mannose isomer 8A1,2,3B1,3) + 3 H2O = N(4)-(alpha-D-Man-(1-&gt;3)-[alpha-D-Man-(1-&gt;3)-[alpha-D-Man-(1-&gt;6)]-alpha-D-Man-(1-&gt;6)]-beta-D-Man-(1-&gt;4)-beta-D-GlcNAc-(1-&gt;4)-beta-D-GlcNAc)-L-asparaginyl-[protein] (N-glucan mannose isomer 5A1,2) + 3 beta-D-mannose. It catalyses the reaction N(4)-(alpha-D-Man-(1-&gt;2)-alpha-D-Man-(1-&gt;2)-alpha-D-Man-(1-&gt;3)-[alpha-D-Man-(1-&gt;2)-alpha-D-Man-(1-&gt;3)-[alpha-D-Man-(1-&gt;2)-alpha-D-Man-(1-&gt;6)]-alpha-D-Man-(1-&gt;6)]-beta-D-Man-(1-&gt;4)-beta-D-GlcNAc-(1-&gt;4)-beta-D-GlcNAc)-L-asparaginyl-[protein] (N-glucan mannose isomer 9A1,2,3B1,2,3) + H2O = N(4)-(alpha-D-Man-(1-&gt;2)-alpha-D-Man-(1-&gt;2)-alpha-D-Man-(1-&gt;3)-[alpha-D-Man-(1-&gt;3)-[alpha-D-Man-(1-&gt;2)-alpha-D-Man-(1-&gt;6)]-alpha-D-Man-(1-&gt;6)]-beta-D-Man-(1-&gt;4)-beta-D-GlcNAc-(1-&gt;4)-beta-D-GlcNAc)-L-asparaginyl-[protein] (N-glucan mannose isomer 8A1,2,3B1,3) + beta-D-mannose. Its pathway is protein modification; protein glycosylation. Inhibited by kifunensine and 1-deoxymannojirimycin, but not by swainsonine. Functionally, class I alpha-mannosidase essential for early N-glycan processing. Removes preferentially alpha-1,2-linked mannose residues from Man(9)GlcNAc(2) to produce Man(8)GlcNAc(2). Involved in root development and cell wall biosynthesis. The chain is Mannosyl-oligosaccharide 1,2-alpha-mannosidase MNS3 (MNS3) from Arabidopsis thaliana (Mouse-ear cress).